Consider the following 329-residue polypeptide: Biotin synthase (329 aa).

The Radical SAM core domain occupies Phe-48 to Arg-278. [4Fe-4S] cluster is bound by residues Cys-66, Cys-70, and Cys-73. 2 residues coordinate [2Fe-2S] cluster: Ser-143 and Cys-203.

The protein belongs to the radical SAM superfamily. Biotin synthase family. Homodimer. [4Fe-4S] cluster is required as a cofactor. It depends on [2Fe-2S] cluster as a cofactor.

The catalysed reaction is (4R,5S)-dethiobiotin + (sulfur carrier)-SH + 2 reduced [2Fe-2S]-[ferredoxin] + 2 S-adenosyl-L-methionine = (sulfur carrier)-H + biotin + 2 5'-deoxyadenosine + 2 L-methionine + 2 oxidized [2Fe-2S]-[ferredoxin]. It functions in the pathway cofactor biosynthesis; biotin biosynthesis; biotin from 7,8-diaminononanoate: step 2/2. Catalyzes the conversion of dethiobiotin (DTB) to biotin by the insertion of a sulfur atom into dethiobiotin via a radical-based mechanism. This is Biotin synthase from Geotalea uraniireducens (strain Rf4) (Geobacter uraniireducens).